The primary structure comprises 105 residues: SAGA-associated factor 11 (105 aa).

An SGF11-type zinc finger spans residues 76–97 (FRCPNCSRDLSANRFAAHLERC).

It belongs to the SGF11 family. In terms of assembly, component of the 1.8 MDa SAGA transcription coactivator-HAT complex. SAGA is built of 5 distinct domains with specialized functions. Within the SAGA complex, SUS1, SGF11, SGF73 and UBP8 form an additional subcomplex of SAGA called the DUB module (deubiquitination module). Interacts directly with SGF73, SUS1 and UBP8.

The protein resides in the nucleus. Functions as a component of the transcription regulatory histone acetylation (HAT) complex SAGA. At the promoters, SAGA is required for recruitment of the basal transcription machinery. It influences RNA polymerase II transcriptional activity through different activities such as TBP interaction and promoter selectivity, interaction with transcription activators, and chromatin modification through histone acetylation and deubiquitination. SAGA acetylates nucleosomal histone H3 to some extent (to form H3K9ac, H3K14ac, H3K18ac and H3K23ac). SAGA interacts with DNA via upstream activating sequences (UASs). Involved in transcriptional regulation of a subset of SAGA-regulated genes. Within the SAGA complex, participates in a subcomplex, that specifically deubiquitinates histones H2B. In Eremothecium gossypii (strain ATCC 10895 / CBS 109.51 / FGSC 9923 / NRRL Y-1056) (Yeast), this protein is SAGA-associated factor 11.